Here is a 688-residue protein sequence, read N- to C-terminus: Putative proline--tRNA ligase YHR020W (688 aa).

A Phosphoserine modification is found at serine 149. At threonine 170 the chain carries Phosphothreonine. The tract at residues 631–650 (ESSAKKDDGEEFEEDDKAPS) is disordered. Serine 655 carries the phosphoserine modification.

This sequence belongs to the class-II aminoacyl-tRNA synthetase family.

It carries out the reaction tRNA(Pro) + L-proline + ATP = L-prolyl-tRNA(Pro) + AMP + diphosphate. The polypeptide is Putative proline--tRNA ligase YHR020W (Saccharomyces cerevisiae (strain ATCC 204508 / S288c) (Baker's yeast)).